We begin with the raw amino-acid sequence, 299 residues long: MANFPASLLILNGKSADNQPLREAITLLRDEGIQIHVRVTWEKGDAQRYVDEARRLGVETVIAGGGDGTINEVSTALIQIRDGVAPALGLLPLGTANDFATSAGIPEALDKALKLAIAGNAMEIDMARVNDKTCFINMATGGFGTRITTETPEKLKAALGGVSYLIHGLMRMDTLTPDRCEIRGENFHWQGDALVIGIGNGRQAGGGQQLCPTALVNDGLLQLRIFTGEELLPALFSTLTQSDDNPNIIDGASAWFDIHAPHEITFNLDGEPLSGQEFHIEVLPGALRCRLPPDCPLLR.

The DAGKc domain maps to 2-133 (ANFPASLLIL…IDMARVNDKT (132 aa)). ATP contacts are provided by residues Thr-40, 66–72 (GDGTINE), and Thr-95. Residues Leu-215, Asp-218, and Leu-220 each contribute to the Mg(2+) site. The Proton acceptor role is filled by Glu-271.

This sequence belongs to the diacylglycerol/lipid kinase family. YegS lipid kinase subfamily. Requires Mg(2+) as cofactor. Ca(2+) is required as a cofactor.

Its subcellular location is the cytoplasm. Functionally, probably phosphorylates lipids; the in vivo substrate is unknown. In Salmonella paratyphi A (strain ATCC 9150 / SARB42), this protein is Probable lipid kinase YegS.